The sequence spans 978 residues: Receptor like protein 21 (978 aa).

The N-terminal stretch at 1-27 (MLLAMEGKLFLCQYLIWVMLLLGQLHG) is a signal peptide. The Extracellular portion of the chain corresponds to 28–930 (CTSCIEKERE…EEDDKAAIDM (903 aa)). Residues Asn-64, Asn-79, Asn-102, Asn-116, and Asn-155 are each glycosylated (N-linked (GlcNAc...) asparagine). 28 LRR repeats span residues 141 to 167 (LRNL…AATS), 169 to 189 (TTLI…GLKD), 190 to 213 (LTNL…LIHL), 214 to 237 (KKLK…ELQN), 238 to 262 (LINL…VFCK), 264 to 287 (KNLR…LGSL), 288 to 310 (KKLR…SFSS), 312 to 335 (ESLE…PLTN), 337 to 361 (TNLK…TWQP), 362 to 385 (NFQL…LLYQ), 386 to 409 (KKLR…LLTN), 410 to 432 (NPEL…PTMV), 433 to 455 (HNLQ…MDHA), 457 to 480 (PNLV…IGEM), 481 to 504 (KNIS…FVTG), 506 to 529 (VSIM…ETNF), 530 to 553 (PSLD…LSNS), 554 to 577 (TMLR…LFEF), 579 to 601 (YLDY…LLGM), 602 to 625 (PFLS…VDSE), 627 to 646 (GIYM…DTLL), 647 to 671 (KSVQ…DTQS), 673 to 693 (NILL…LCDL), 694 to 716 (SNVR…CLSN), 788 to 811 (LRLM…ELGD), 812 to 835 (LLKL…SFSK), 837 to 859 (IDVE…LLSS), and 860 to 885 (LTSL…QFNT). N-linked (GlcNAc...) asparagine glycosylation occurs at Asn-204. Asn-335 carries N-linked (GlcNAc...) asparagine glycosylation. N-linked (GlcNAc...) asparagine glycans are attached at residues Asn-397 and Asn-420. N-linked (GlcNAc...) asparagine glycosylation is found at Asn-463, Asn-482, and Asn-492. Asn-552 is a glycosylation site (N-linked (GlcNAc...) asparagine). Residue Asn-636 is glycosylated (N-linked (GlcNAc...) asparagine). 2 N-linked (GlcNAc...) asparagine glycosylation sites follow: Asn-681 and Asn-716. Asn-819 carries an N-linked (GlcNAc...) asparagine glycan. The N-linked (GlcNAc...) asparagine glycan is linked to Asn-872. The segment at 902-922 (TSRSCETNKSPEEADNGQEEE) is disordered. The chain crosses the membrane as a helical span at residues 931 to 951 (MVFYFSTASIYVTALIGVLVL). Residues 952 to 978 (MCFDCPWRRAWLRIVDAFIASAKHVLP) are Cytoplasmic-facing.

This sequence belongs to the RLP family.

Its subcellular location is the cell membrane. This Arabidopsis thaliana (Mouse-ear cress) protein is Receptor like protein 21.